Reading from the N-terminus, the 152-residue chain is D-aminoacyl-tRNA deacylase (152 aa).

Positions 137 to 138 match the Gly-cisPro motif, important for rejection of L-amino acids motif; that stretch reads GP.

It belongs to the DTD family. In terms of assembly, homodimer.

It localises to the cytoplasm. The catalysed reaction is glycyl-tRNA(Ala) + H2O = tRNA(Ala) + glycine + H(+). It carries out the reaction a D-aminoacyl-tRNA + H2O = a tRNA + a D-alpha-amino acid + H(+). Functionally, an aminoacyl-tRNA editing enzyme that deacylates mischarged D-aminoacyl-tRNAs. Also deacylates mischarged glycyl-tRNA(Ala), protecting cells against glycine mischarging by AlaRS. Acts via tRNA-based rather than protein-based catalysis; rejects L-amino acids rather than detecting D-amino acids in the active site. By recycling D-aminoacyl-tRNA to D-amino acids and free tRNA molecules, this enzyme counteracts the toxicity associated with the formation of D-aminoacyl-tRNA entities in vivo and helps enforce protein L-homochirality. The sequence is that of D-aminoacyl-tRNA deacylase from Thermus aquaticus.